The sequence spans 444 residues: L-ornithine N(5)-monooxygenase (444 aa).

FAD is bound by residues Glu40 to His48 and Gln59. Lys64 provides a ligand contact to substrate. Val125 provides a ligand contact to FAD. NADP(+) is bound by residues Ala211–Ser214 and Arg236. Substrate-binding positions include Asn250–Phe253 and Asn280. Residue Asn280 to Ala282 participates in NADP(+) binding. An FAD-binding site is contributed by Arg408–Cys410. Over residues Ser420 to Thr432 the composition is skewed to basic residues. The tract at residues Ser420–Asp444 is disordered.

It belongs to the lysine N(6)-hydroxylase/L-ornithine N(5)-oxygenase family. Requires FAD as cofactor.

The enzyme catalyses L-ornithine + NADPH + O2 = N(5)-hydroxy-L-ornithine + NADP(+) + H2O. The protein operates within siderophore biosynthesis; ornibactin biosynthesis. Its function is as follows. Catalyzes the conversion of L-ornithine to N(5)-hydroxyornithine, the first step in the biosynthesis of all hydroxamate-containing siderophores, such as ornibactin. This Burkholderia cepacia (Pseudomonas cepacia) protein is L-ornithine N(5)-monooxygenase.